The following is a 222-amino-acid chain: Protein-L-isoaspartate O-methyltransferase (222 aa).

Residue Ser-67 is part of the active site.

The protein belongs to the methyltransferase superfamily. L-isoaspartyl/D-aspartyl protein methyltransferase family.

It is found in the cytoplasm. The enzyme catalyses [protein]-L-isoaspartate + S-adenosyl-L-methionine = [protein]-L-isoaspartate alpha-methyl ester + S-adenosyl-L-homocysteine. In terms of biological role, catalyzes the methyl esterification of L-isoaspartyl residues in peptides and proteins that result from spontaneous decomposition of normal L-aspartyl and L-asparaginyl residues. It plays a role in the repair and/or degradation of damaged proteins. The sequence is that of Protein-L-isoaspartate O-methyltransferase from Parvibaculum lavamentivorans (strain DS-1 / DSM 13023 / NCIMB 13966).